A 245-amino-acid chain; its full sequence is 14-3-3 protein zeta (245 aa).

It belongs to the 14-3-3 family. As to quaternary structure, homodimer.

Its subcellular location is the cytoplasm. Adapter protein implicated in the regulation of a large spectrum of both general and specialized signaling pathways. Binds to a large number of partners, usually by recognition of a phosphoserine or phosphothreonine motif. Binding generally results in the modulation of the activity of the binding partner. The protein is 14-3-3 protein zeta (ywhaz) of Xenopus tropicalis (Western clawed frog).